We begin with the raw amino-acid sequence, 64 residues long: Disintegrin CV-11-beta (64 aa).

A Disintegrin domain is found at 1–64 (NSAHPCCDPV…SDCPRNPWKD (64 aa)). Intrachain disulfides connect Cys-6–Cys-29, Cys-20–Cys-26, Cys-25–Cys-50, and Cys-38–Cys-57. The short motif at 42-44 (RGD) is the Cell attachment site element.

This sequence belongs to the disintegrin family. Dimeric disintegrin subfamily. As to quaternary structure, heterodimer with subunit alpha; disulfide-linked. As to expression, expressed by the venom gland.

It localises to the secreted. Functionally, inhibits ADP-induced human platelet aggregation. Antagonist of alpha-IIb/beta-3 (ITGA2B/ITGB3). The polypeptide is Disintegrin CV-11-beta (Cerastes vipera (Sahara sand viper)).